Reading from the N-terminus, the 438-residue chain is Enolase (438 aa).

2 residues coordinate substrate: H159 and E168. The active-site Proton donor is the E211. D246, E297, and D322 together coordinate Mg(2+). Residues E297 and D322 each contribute to the substrate site. K347 serves as the catalytic Proton acceptor. Residues 374–377 (SHRS) and K398 each bind substrate.

Belongs to the enolase family. In terms of assembly, homodimer. Mg(2+) is required as a cofactor.

The protein localises to the cytoplasm. The catalysed reaction is (2R)-2-phosphoglycerate = phosphoenolpyruvate + H2O. It functions in the pathway carbohydrate degradation; glycolysis; pyruvate from D-glyceraldehyde 3-phosphate: step 4/5. The chain is Enolase (ENO1) from Cryphonectria parasitica (Chestnut blight fungus).